Here is a 125-residue protein sequence, read N- to C-terminus: Translation initiation factor 5A (125 aa).

Hypusine is present on lysine 35.

Belongs to the eIF-5A family.

It is found in the cytoplasm. Functions by promoting the formation of the first peptide bond. This is Translation initiation factor 5A (eIF5A) from Methanoculleus marisnigri (strain ATCC 35101 / DSM 1498 / JR1).